We begin with the raw amino-acid sequence, 668 residues long: UvrABC system protein B (668 aa).

One can recognise a Helicase ATP-binding domain in the interval 36-423 (DNIKGGEKAQ…TETVVEQIIR (388 aa)). Residue 49 to 56 (GATGTGKT) participates in ATP binding. Positions 102-125 (YYDYYQPEAYVPSSDTYIEKDSSI) match the Beta-hairpin motif. The 167-residue stretch at 440-606 (QMDDLLGEIN…TIKKEIRDLI (167 aa)) folds into the Helicase C-terminal domain. One can recognise a UVR domain in the interval 632–667 (QEAIKKLQKQMHEAAELLDFELAAQIRDMVLELKSM).

The protein belongs to the UvrB family. Forms a heterotetramer with UvrA during the search for lesions. Interacts with UvrC in an incision complex.

The protein localises to the cytoplasm. Functionally, the UvrABC repair system catalyzes the recognition and processing of DNA lesions. A damage recognition complex composed of 2 UvrA and 2 UvrB subunits scans DNA for abnormalities. Upon binding of the UvrA(2)B(2) complex to a putative damaged site, the DNA wraps around one UvrB monomer. DNA wrap is dependent on ATP binding by UvrB and probably causes local melting of the DNA helix, facilitating insertion of UvrB beta-hairpin between the DNA strands. Then UvrB probes one DNA strand for the presence of a lesion. If a lesion is found the UvrA subunits dissociate and the UvrB-DNA preincision complex is formed. This complex is subsequently bound by UvrC and the second UvrB is released. If no lesion is found, the DNA wraps around the other UvrB subunit that will check the other stand for damage. This is UvrABC system protein B from Streptococcus thermophilus (strain CNRZ 1066).